We begin with the raw amino-acid sequence, 116 residues long: Small ribosomal subunit protein eS24 (116 aa).

Residues 81–116 (IEPEHMVERHKKVLEELESESEESEESESEESEEEE) are disordered. Positions 96–116 (ELESESEESEESESEESEEEE) are enriched in acidic residues.

It belongs to the eukaryotic ribosomal protein eS24 family.

This chain is Small ribosomal subunit protein eS24, found in Methanopyrus kandleri (strain AV19 / DSM 6324 / JCM 9639 / NBRC 100938).